The sequence spans 451 residues: Tubulin gamma-1 chain (451 aa).

The residue at position 131 (Ser-131) is a Phosphoserine; by BRSK1. 142 to 148 (AGGTGSG) is a GTP binding site.

Belongs to the tubulin family. Component of the gamma-tubulin ring complex (gTuRC) consisting of TUBGCP2, TUBGCP3, TUBGCP4, TUBGCP5 and TUBGCP6 and gamma-tubulin TUBG1 or TUBG2. TUBGCP2, TUBGCP3, TUBGCP4, TUBGCP5 and TUBGCP6 assemble in a 5:5:2:1:1 stoichiometry; each is associated with a gamma-tubulin, thereby arranging 14 gamma-tubulins in a helical manner. Gamma-tubulin at the first position is blocked by TUBGCP3 at the last position, allowing 13 protafilaments to grow into a microtubule. The gTuRC (via TUBGCP3 and TUBGCP6) interacts with ACTB and MZT1; the interactions form a luminal bridge that stabilizes the initial structure during complex assembly. The gTuRC (via TUBGCP2) interacts with MZT2A/MZT2B and CDK5RAP2 (via CM1 motif); the interactions play a role in gTuRC activation. Interacts with alpha-beta tubulin heterodimers; the interaction allows microtubules to nucleate from the gTuRC. Interacts with B9D2. Interacts with CDK5RAP2; the interaction is leading to centrosomal localization of TUBG1 and CDK5RAP2. Interacts with CIMAP3. Interacts with SAS6 and NUP62 at the centrosome. Interacts with EML3 (phosphorylated at 'Thr-881') and HAUS8. Interacts with DNM2; this interaction may participate in centrosome cohesion. Interacts with CCDC66. Phosphorylation at Ser-131 by BRSK1 regulates centrosome duplication, possibly by mediating relocation of gamma-tubulin and its associated proteins from the cytoplasm to the centrosome.

The protein resides in the cytoplasm. It localises to the cytoskeleton. Its subcellular location is the microtubule organizing center. The protein localises to the centrosome. It is found in the spindle. Its function is as follows. Tubulin is the major constituent of microtubules, protein filaments consisting of alpha- and beta-tubulin heterodimers. Gamma-tubulin is a key component of the gamma-tubulin ring complex (gTuRC) which mediates microtubule nucleation. The gTuRC regulates the minus-end nucleation of alpha-beta tubulin heterodimers that grow into microtubule protafilaments, a critical step in centrosome duplication and spindle formation. This is Tubulin gamma-1 chain from Canis lupus familiaris (Dog).